A 534-amino-acid chain; its full sequence is Probable cytochrome c oxidase subunit 1 (534 aa).

8 helical membrane passes run 35 to 55 (IMYI…SLLF), 76 to 96 (VLIT…ALFS), 97 to 117 (GFGN…FPRL), 120 to 140 (ISFW…FIDG), 165 to 185 (VAIF…INLI), 202 to 222 (PLFV…MPVL), 254 to 274 (LFWF…FGIV), and 286 to 306 (IFGY…GFIV). His-81 provides a ligand contact to Fe(II)-heme a. His-260 and Tyr-264 together coordinate Cu cation. The 1'-histidyl-3'-tyrosine (His-Tyr) cross-link spans 260-264 (HPEVY). Positions 309 and 310 each coordinate Cu cation. The next 2 membrane-spanning stretches (helical) occupy residues 320 to 340 (ALIY…IKIF) and 357 to 377 (MLFA…GIIL). Heme a3 is bound at residue His-395. 3 helical membrane-spanning segments follow: residues 396-416 (FHYT…YYWF), 433-453 (FWIT…LGLA), and 475-495 (IGAG…FYTL). His-397 serves as a coordination point for Fe(II)-heme a.

Belongs to the heme-copper respiratory oxidase family.

It localises to the cell membrane. The enzyme catalyses 4 Fe(II)-[cytochrome c] + O2 + 8 H(+)(in) = 4 Fe(III)-[cytochrome c] + 2 H2O + 4 H(+)(out). Its pathway is energy metabolism; oxidative phosphorylation. Its function is as follows. Cytochrome c oxidase is the component of the respiratory chain that catalyzes the reduction of oxygen to water. Subunits 1-3 form the functional core of the enzyme complex. CO I is the catalytic subunit of the enzyme. Electrons originating in cytochrome c are transferred via the copper A center of subunit 2 and heme A of subunit 1 to the bimetallic center formed by heme A3 and copper B. The sequence is that of Probable cytochrome c oxidase subunit 1 (ctaD) from Rickettsia prowazekii (strain Madrid E).